Reading from the N-terminus, the 94-residue chain is MLKPLGDRIVIEVVETEEKTASGIVLPDTAKEKPQEGRVVAVGTGRVLDNGQRVAPEVEVGDRIIFSKYAGTEVKYDGKEYLILRESDILAVIG.

It belongs to the GroES chaperonin family. In terms of assembly, heptamer of 7 subunits arranged in a ring. Interacts with the chaperonin GroEL.

It is found in the cytoplasm. Its function is as follows. Together with the chaperonin GroEL, plays an essential role in assisting protein folding. The GroEL-GroES system forms a nano-cage that allows encapsulation of the non-native substrate proteins and provides a physical environment optimized to promote and accelerate protein folding. GroES binds to the apical surface of the GroEL ring, thereby capping the opening of the GroEL channel. The chain is Co-chaperonin GroES from Geobacillus thermodenitrificans (strain NG80-2).